We begin with the raw amino-acid sequence, 396 residues long: MKTLPLLLLLLLDLGQAQGTLDRVPLRRQPSLRKKLRAQGQLSEFWKAHKVDMVQYTETCTMEQSANEPLINYLDMEYFGTISIGSPPQNFTVIFDTVSSNLWVPSVYCTSPACQMHPQFRPSQSNTYSEVGTPFSIAYGTGSLTGIIGADQVSVQGLTVVGQQFGESVKEPGQTFVNAEFDGILGLGYPSLAAGGVTPVFDNMMAQNLVSLPMFSVYMSSNPEGGSGSELTFGGYDSSHFSGSLNWVPVTKQGYWQIALDEIQVGGSPMFCPEGCQAIVDTGTSLITGPSDKIIQLQAAIGATPMDGEYAVECENLNIMPDVTFVINGVPYTLSATAYTLPDFVDGMQFCGSGFQGLDIQPPAGPLWILGDVFIRQFYSVFDRGSNRVGLAPAVP.

An N-terminal signal peptide occupies residues 1–19 (MKTLPLLLLLLLDLGQAQG). A propeptide spans 20–53 (TLDRVPLRRQPSLRKKLRAQGQLSEFWKAHKVDM) (activation peptide). The Peptidase A1 domain maps to 78–392 (YFGTISIGSP…DRGSNRVGLA (315 aa)). An N-linked (GlcNAc...) asparagine glycan is attached at asparagine 90. Aspartate 96 is an active-site residue. 2 disulfides stabilise this stretch: cysteine 109–cysteine 114 and cysteine 272–cysteine 276. Aspartate 281 is a catalytic residue. Cysteine 314 and cysteine 351 form a disulfide bridge.

It belongs to the peptidase A1 family. Homodimer; disulfide-linked. In terms of processing, glycosylated. The nature of the carbohydrate chain varies between cell types.

It is found in the endosome. It carries out the reaction Similar to cathepsin D, but slightly broader specificity.. Its function is as follows. May have a role in immune function. Probably involved in the processing of antigenic peptides during MHC class II-mediated antigen presentation. May play a role in activation-induced lymphocyte depletion in the thymus, and in neuronal degeneration and glial cell activation in the brain. This Oryctolagus cuniculus (Rabbit) protein is Cathepsin E (CTSE).